A 98-amino-acid polypeptide reads, in one-letter code: Small ribosomal subunit protein bS20 (98 aa).

Over residues 1–15 the composition is skewed to basic residues; that stretch reads MAPKKTTKKGGPKKR. A disordered region spans residues 1-21; it reads MAPKKTTKKGGPKKRPSAEKR.

It belongs to the bacterial ribosomal protein bS20 family.

Its function is as follows. Binds directly to 16S ribosomal RNA. The chain is Small ribosomal subunit protein bS20 from Chlamydia felis (strain Fe/C-56) (Chlamydophila felis).